The following is an 843-amino-acid chain: Eisosome protein 1 (843 aa).

The interval 1-53 (MSLISAVEDRDIHNIGKTSGGGSRTSSITSSKKSLKHGSKSLRKPKVYQTTGE) is disordered. Serine 2 carries the N-acetylserine modification. At serine 2 the chain carries Phosphoserine. Over residues 33-46 (KSLKHGSKSLRKPK) the composition is skewed to basic residues. Serine 88 and serine 130 each carry phosphoserine. The segment at 120-174 (KMGPKVVRNNSITSATSKTSKESQTKRKSKESPGAAASKAYSMTMETTSLSSQTN) is disordered. Polar residues-rich tracts occupy residues 127 to 137 (RNNSITSATSK) and 163 to 174 (TMETTSLSSQTN). Residues serine 182, serine 401, serine 584, and serine 710 each carry the phosphoserine modification. A disordered region spans residues 717-843 (DLPTQLEKIE…QDAISNQEKK (127 aa)). At threonine 720 the chain carries Phosphothreonine. Residues 752–764 (STAAKEATETSSA) show a composition bias toward low complexity. 2 positions are modified to phosphoserine: serine 763 and serine 775. Residues 781 to 797 (SGKEDANDCKSAEHSKE) show a composition bias toward basic and acidic residues. Residues 798–810 (ISVSQKAGNNKSL) are compositionally biased toward polar residues. Serine 816, serine 828, serine 829, and serine 838 each carry phosphoserine.

It belongs to the EIS1 family.

The protein resides in the cytoplasmic granule. The protein localises to the cell membrane. In terms of biological role, required for normal formation of eisosomes, large cytoplasmic protein assemblies that localize to specialized domains on plasma membrane and mark the site of endocytosis. In Saccharomyces cerevisiae (strain ATCC 204508 / S288c) (Baker's yeast), this protein is Eisosome protein 1 (EIS1).